Reading from the N-terminus, the 258-residue chain is NH(3)-dependent NAD(+) synthetase (258 aa).

ATP is bound at residue 34 to 41; it reads GLSGGIDS. Asp40 contributes to the Mg(2+) binding site. Arg116 is a deamido-NAD(+) binding site. Thr136 contacts ATP. A Mg(2+)-binding site is contributed by Glu141. Residues Lys165 and Ser187 each coordinate ATP.

This sequence belongs to the NAD synthetase family. In terms of assembly, homodimer.

The enzyme catalyses deamido-NAD(+) + NH4(+) + ATP = AMP + diphosphate + NAD(+) + H(+). The protein operates within cofactor biosynthesis; NAD(+) biosynthesis; NAD(+) from deamido-NAD(+) (ammonia route): step 1/1. Catalyzes the ATP-dependent amidation of deamido-NAD to form NAD. Uses ammonia as a nitrogen source. In Fusobacterium nucleatum subsp. nucleatum (strain ATCC 25586 / DSM 15643 / BCRC 10681 / CIP 101130 / JCM 8532 / KCTC 2640 / LMG 13131 / VPI 4355), this protein is NH(3)-dependent NAD(+) synthetase.